A 736-amino-acid chain; its full sequence is 3',5'-cyclic-AMP phosphodiesterase 4B (736 aa).

Disordered regions lie at residues 51–77 (QLPP…PTTL) and 96–116 (DVEN…SSSS). The residue at position 56 (serine 56) is a Phosphoserine. Phosphoserine is present on serine 290. A PDEase domain is found at 330 to 659 (VNTENEDHLA…NWYQSMIPQS (330 aa)). Histidine 406 (proton donor) is an active-site residue. Histidine 406 is a 3',5'-cyclic AMP binding site. AMP is bound by residues histidine 406 and histidine 410. Zn(2+) is bound by residues histidine 410, histidine 446, aspartate 447, and aspartate 564. Positions 447, 564, 615, and 618 each coordinate AMP. Position 447 (aspartate 447) interacts with Mg(2+). Aspartate 447 provides a ligand contact to Mn(2+). 3',5'-cyclic AMP is bound by residues glutamine 615 and phenylalanine 618. Phosphoserine is present on residues serine 659 and serine 661. The interval 685-736 (EEEDSEGPEKEGEGPNYFSSTKTLCVIDPENRDSLEETDIDIATEDKSLIDT) is disordered.

It belongs to the cyclic nucleotide phosphodiesterase family. PDE4 subfamily. Interacts with DISC1. Zn(2+) serves as cofactor. Requires Mg(2+) as cofactor. It depends on Mn(2+) as a cofactor. As to expression, widely expressed. Expressed in brain, heart, lung and liver. In terms of tissue distribution, expressed in liver and brain.

It is found in the cytoplasm. The protein localises to the cell membrane. The catalysed reaction is 3',5'-cyclic AMP + H2O = AMP + H(+). The protein operates within purine metabolism; 3',5'-cyclic AMP degradation; AMP from 3',5'-cyclic AMP: step 1/1. Inhibited by rolipram. In terms of biological role, hydrolyzes the second messenger cAMP, which is a key regulator of many important physiological processes. The polypeptide is 3',5'-cyclic-AMP phosphodiesterase 4B (Rattus norvegicus (Rat)).